The following is a 574-amino-acid chain: Aspartate--tRNA ligase (574 aa).

Glu169 is an L-aspartate binding site. Positions 193–196 (QLFK) are aspartate. Arg215 serves as a coordination point for L-aspartate. ATP contacts are provided by residues 215–217 (RDE) and Gln224. Position 437 (His437) interacts with L-aspartate. An ATP-binding site is contributed by Glu471. Arg478 is an L-aspartate binding site. 523 to 526 (GLDR) contributes to the ATP binding site.

Belongs to the class-II aminoacyl-tRNA synthetase family. Type 1 subfamily. Homodimer.

The protein resides in the cytoplasm. The catalysed reaction is tRNA(Asp) + L-aspartate + ATP = L-aspartyl-tRNA(Asp) + AMP + diphosphate. Its function is as follows. Catalyzes the attachment of L-aspartate to tRNA(Asp) in a two-step reaction: L-aspartate is first activated by ATP to form Asp-AMP and then transferred to the acceptor end of tRNA(Asp). The chain is Aspartate--tRNA ligase from Mycoplasma mycoides subsp. mycoides SC (strain CCUG 32753 / NCTC 10114 / PG1).